Consider the following 435-residue polypeptide: 3-phosphoshikimate 1-carboxyvinyltransferase (435 aa).

3 residues coordinate 3-phosphoshikimate: Lys22, Ser23, and Arg27. Lys22 is a binding site for phosphoenolpyruvate. 2 residues coordinate phosphoenolpyruvate: Gly95 and Arg123. 3-phosphoshikimate-binding residues include Ser168, Gln170, Asp319, and Lys346. Residue Gln170 participates in phosphoenolpyruvate binding. Asp319 functions as the Proton acceptor in the catalytic mechanism. The phosphoenolpyruvate site is built by Arg350 and Arg393.

This sequence belongs to the EPSP synthase family. As to quaternary structure, monomer.

It is found in the cytoplasm. The catalysed reaction is 3-phosphoshikimate + phosphoenolpyruvate = 5-O-(1-carboxyvinyl)-3-phosphoshikimate + phosphate. It participates in metabolic intermediate biosynthesis; chorismate biosynthesis; chorismate from D-erythrose 4-phosphate and phosphoenolpyruvate: step 6/7. Catalyzes the transfer of the enolpyruvyl moiety of phosphoenolpyruvate (PEP) to the 5-hydroxyl of shikimate-3-phosphate (S3P) to produce enolpyruvyl shikimate-3-phosphate and inorganic phosphate. This chain is 3-phosphoshikimate 1-carboxyvinyltransferase, found in Chloroflexus aggregans (strain MD-66 / DSM 9485).